We begin with the raw amino-acid sequence, 153 residues long: Large ribosomal subunit protein uL15 (153 aa).

Residues 21 to 42 form a disordered region; sequence RGIGSGKGKTGGRGIKGQKSRS. Residues 23-35 show a composition bias toward gly residues; sequence IGSGKGKTGGRGI.

This sequence belongs to the universal ribosomal protein uL15 family. As to quaternary structure, part of the 50S ribosomal subunit.

Functionally, binds to the 23S rRNA. This is Large ribosomal subunit protein uL15 from Rickettsia peacockii (strain Rustic).